Consider the following 163-residue polypeptide: Transcription antitermination protein NusB (163 aa).

Positions 1 to 21 are disordered; the sequence is MTTFLSDSEHPQDVKAPPKSA.

Belongs to the NusB family.

Functionally, involved in transcription antitermination. Required for transcription of ribosomal RNA (rRNA) genes. Binds specifically to the boxA antiterminator sequence of the ribosomal RNA (rrn) operons. This is Transcription antitermination protein NusB from Dechloromonas aromatica (strain RCB).